Reading from the N-terminus, the 910-residue chain is DNA mismatch repair protein MutS (910 aa).

Residues 1–11 (MEAKVEEKEPE) show a composition bias toward basic and acidic residues. Positions 1–21 (MEAKVEEKEPEPVENAGPDAP) are disordered. An ATP-binding site is contributed by 658 to 665 (GPNMGGKS).

Belongs to the DNA mismatch repair MutS family.

Its function is as follows. This protein is involved in the repair of mismatches in DNA. It is possible that it carries out the mismatch recognition step. This protein has a weak ATPase activity. The sequence is that of DNA mismatch repair protein MutS from Brucella canis (strain ATCC 23365 / NCTC 10854 / RM-666).